Consider the following 303-residue polypeptide: Methionyl-tRNA formyltransferase (303 aa).

(6S)-5,6,7,8-tetrahydrofolate is bound at residue 108–111 (SDLP).

The protein belongs to the Fmt family.

It carries out the reaction L-methionyl-tRNA(fMet) + (6R)-10-formyltetrahydrofolate = N-formyl-L-methionyl-tRNA(fMet) + (6S)-5,6,7,8-tetrahydrofolate + H(+). Functionally, attaches a formyl group to the free amino group of methionyl-tRNA(fMet). The formyl group appears to play a dual role in the initiator identity of N-formylmethionyl-tRNA by promoting its recognition by IF2 and preventing the misappropriation of this tRNA by the elongation apparatus. This is Methionyl-tRNA formyltransferase from Rickettsia canadensis (strain McKiel).